The sequence spans 439 residues: Chitinase-like protein Idgf1 (439 aa).

The N-terminal stretch at 1–20 (MRFQLFYILGLLSVTSLTHA) is a signal peptide. The GH18 domain occupies 22–439 (SNLICYYDSN…ILRSIKYFMG (418 aa)). The cysteines at positions 26 and 53 are disulfide-linked. N-linked (GlcNAc...) asparagine glycosylation is found at Asn-122, Asn-218, and Asn-346. Cys-340 and Cys-423 are disulfide-bonded.

This sequence belongs to the glycosyl hydrolase 18 family. IDGF subfamily. As to expression, primarily expressed in yolk cells and fat body. In larvae, it is expressed in large salivary gland cells and weakly expressed in imaginal disks. Less expressed than Idgf2 and Idgf4.

The protein resides in the secreted. Cooperates with insulin-like peptides to stimulate the proliferation, polarization and motility of imaginal disk cells. May act by stabilizing the binding of insulin-like peptides to its receptor through a simultaneous interaction with both molecules to form a multiprotein signaling complex. This chain is Chitinase-like protein Idgf1 (Idgf1), found in Drosophila melanogaster (Fruit fly).